The chain runs to 146 residues: MKLHELKPAEGSRKQRNRVGRGIGSGNGKTAGKGHKGQNARSGGGVRPGFEGGQNPLFRRLPKRGFTNINRKEYAIVNLDALNRFEDGAEVTTALLLETGLVSNEKAGIKVLGNGTLNKKLTVKAHKFSASAKEAIENAGGTTEVI.

A compositionally biased stretch (basic and acidic residues) spans 1-13; that stretch reads MKLHELKPAEGSR. The tract at residues 1 to 60 is disordered; that stretch reads MKLHELKPAEGSRKQRNRVGRGIGSGNGKTAGKGHKGQNARSGGGVRPGFEGGQNPLFRR. Gly residues-rich tracts occupy residues 21–31 and 42–52; these read RGIGSGNGKTA and SGGGVRPGFEG.

Belongs to the universal ribosomal protein uL15 family. As to quaternary structure, part of the 50S ribosomal subunit.

Binds to the 23S rRNA. This chain is Large ribosomal subunit protein uL15, found in Lysinibacillus sphaericus (strain C3-41).